Here is a 241-residue protein sequence, read N- to C-terminus: Pyridoxal phosphate phosphatase PHOSPHO2 (241 aa).

The Nucleophile role is filled by Asp8. Mg(2+) contacts are provided by Asp8 and Asp10. Asp10 functions as the Proton donor in the catalytic mechanism. Residues Asp19 and Asp99 each coordinate substrate. Asp179 lines the Mg(2+) pocket.

This sequence belongs to the HAD-like hydrolase superfamily. PHOSPHO family. Requires Mg(2+) as cofactor.

It catalyses the reaction pyridoxal 5'-phosphate + H2O = pyridoxal + phosphate. Functionally, phosphatase that has high activity toward pyridoxal 5'-phosphate (PLP). Also active at much lower level toward pyrophosphate, phosphoethanolamine (PEA), phosphocholine (PCho), phospho-l-tyrosine, fructose-6-phosphate, p-nitrophenyl phosphate, and h-glycerophosphate. The chain is Pyridoxal phosphate phosphatase PHOSPHO2 (Phospho2) from Mus musculus (Mouse).